The chain runs to 100 residues: A-type ATP synthase subunit F (100 aa).

The protein belongs to the V-ATPase F subunit family. As to quaternary structure, has multiple subunits with at least A(3), B(3), C, D, E, F, H, I and proteolipid K(x).

The protein resides in the cell membrane. Functionally, component of the A-type ATP synthase that produces ATP from ADP in the presence of a proton gradient across the membrane. The polypeptide is A-type ATP synthase subunit F (Methanoregula boonei (strain DSM 21154 / JCM 14090 / 6A8)).